Reading from the N-terminus, the 60-residue chain is uncharacterized protein (60 aa).

This is an uncharacterized protein from Methanocaldococcus jannaschii (strain ATCC 43067 / DSM 2661 / JAL-1 / JCM 10045 / NBRC 100440) (Methanococcus jannaschii).